The primary structure comprises 335 residues: Tetraacyldisaccharide 4'-kinase (335 aa).

59–66 is a binding site for ATP; sequence TAGGNGKT.

It belongs to the LpxK family.

It catalyses the reaction a lipid A disaccharide + ATP = a lipid IVA + ADP + H(+). It participates in glycolipid biosynthesis; lipid IV(A) biosynthesis; lipid IV(A) from (3R)-3-hydroxytetradecanoyl-[acyl-carrier-protein] and UDP-N-acetyl-alpha-D-glucosamine: step 6/6. Functionally, transfers the gamma-phosphate of ATP to the 4'-position of a tetraacyldisaccharide 1-phosphate intermediate (termed DS-1-P) to form tetraacyldisaccharide 1,4'-bis-phosphate (lipid IVA). This chain is Tetraacyldisaccharide 4'-kinase, found in Vibrio cholerae serotype O1 (strain ATCC 39541 / Classical Ogawa 395 / O395).